The primary structure comprises 365 residues: Outer capsid protein sigma-3 (365 aa).

The CCHC-type zinc finger occupies 51–73; sequence CMHCLGVVGSLQRKLKHLPHHKC.

Belongs to the orthoreovirus sigma-3 protein family. Heterohexamer of three sigma-3 and three Mu-1 proteins. The RNA-binding form is probably a homodimer. Cleaved during virus the endosomal proteolytic disassembly of the outer capsid.

The protein localises to the virion. The protein resides in the host cytoplasm. It is found in the host nucleus. In terms of biological role, stimulates translation by blocking the activation of the dsRNA-dependent protein kinase EIF2AK2/PKR, thereby inhibiting the host interferon response. Sigma3 prevents the activation of EIF2AK2 by competing with the kinase for dsRNA-binding. Its function is as follows. The viral outer shell polypeptides, of which sigma-3 is one, impose structural constraints that prevent elongation of nascent transcripts by the RNA-dependent RNA polymerase lambda-3. In Mammalia (T2J), this protein is Outer capsid protein sigma-3 (S4).